Here is a 140-residue protein sequence, read N- to C-terminus: Translation initiation factor 2 subunit beta (140 aa).

This sequence belongs to the eIF-2-beta/eIF-5 family. As to quaternary structure, heterotrimer composed of an alpha, a beta and a gamma chain.

EIF-2 functions in the early steps of protein synthesis by forming a ternary complex with GTP and initiator tRNA. This is Translation initiation factor 2 subunit beta (eif2b) from Pyrococcus horikoshii (strain ATCC 700860 / DSM 12428 / JCM 9974 / NBRC 100139 / OT-3).